The following is a 2094-amino-acid chain: Non-reducing polyketide synthase ustP (2094 aa).

Residues 9-243 are N-terminal acylcarrier protein transacylase (SAT) domain; the sequence is VFGDLSVPYH…GKIQVGGLFH (235 aa). A disordered region spans residues 357–377; it reads NTAGVDSSSRGSGHADAEKQP. Positions 379-813 constitute a Ketosynthase family 3 (KS3) domain; sequence RSKIAIIGFS…GGNSSVLVED (435 aa). Active-site for beta-ketoacyl synthase activity residues include C551, H686, and H727. The malonyl-CoA:ACP transacylase (MAT) domain stretch occupies residues 914-1227; the sequence is FSFTGQGSQY…EDDCKIFTPA (314 aa). The active-site For acyl/malonyl transferase activity is S1004. Residues 1305-1629 form a product template (PT) domain region; the sequence is TTSVQYITAE…QRKVLDLVLP (325 aa). Positions 1308 to 1445 are N-terminal hotdog fold; it reads VQYITAESYG…CSGFFTDKSR (138 aa). A PKS/mFAS DH domain is found at 1308–1625; the sequence is VQYITAESYG…FAAVQRKVLD (318 aa). H1341 serves as the catalytic Proton acceptor; for dehydratase activity. Residues 1473-1625 are C-terminal hotdog fold; it reads GSVHMIKTGM…FAAVQRKVLD (153 aa). The active-site Proton donor; for dehydratase activity is the D1536. The segment covering 1644 to 1671 has biased composition (low complexity); that stretch reads AAAAPSQRQQQQQQQQQQQPAQPVAASQ. A disordered region spans residues 1644–1689; the sequence is AAAAPSQRQQQQQQQQQQQPAQPVAASQESGMDDMPPTLVPSEKKD. The region spanning 1689–1763 is the Carrier domain; it reads DVPSEKLKVI…ELVRHILGSS (75 aa). S1723 carries the post-translational modification O-(pantetheine 4'-phosphoryl)serine. Residues 1762 to 1778 are compositionally biased toward polar residues; sequence SSTPSSDSGPATPSITP. The segment at 1762-1782 is disordered; that stretch reads SSTPSSDSGPATPSITPLQEP. The segment at 1844 to 2069 is claisen cyclase domain; that stretch reads KVWLFPDGSG…GVVEGAHHFS (226 aa). S1916 serves as the catalytic For Claisen cyclase activity.

It catalyses the reaction 6 malonyl-CoA + acetyl-CoA + 6 H(+) = naphtopyrone YWA1 + 6 CO2 + 7 CoA + H2O. It participates in secondary metabolite biosynthesis. Non-reducing polyketide synthase; part of the gene cluster that mediates the biosynthesis of ustilaginoidins, dimeric gamma-naphthopyrones isolated from different fungal species. The first step in the biosynthesis of ustilaginoidins is the production of gamma-naphthopyrone precursor YWA1 by the non-reducing polyketide synthase ustP, via condensation of one acetyl-CoA starter unit with 6 malonyl-CoA units. YWA1 is then probably substrate of the ustZ to yield norrubrofusarin via a dehydration reaction. A key enzyme in the biosynthetic pathway is the laccase ustL, which catalyzes the oxidative dimerization of norrubrofusarin to ustilaginoidin A. It can produce the M- and P-atropisomers in varying amounts, depending on the reaction conditions. For the biosynthesis of 3-methylustilaginoid in derivatives such as chaetochromin A, a methylated derivative of YWA1 is required. The C-methylation is considered to be catalyzed by ustM, the phosphopantetheine attachment site of which indicates that it acts on the growing polyketide chain before release of the product. For the biosynthesis of chaetochromin A, it is assumed that saturation of the D2 double bond takes place before dimerization, and is probably catalyzed by an external reductase because no candidate gene was identified within the cluster. The chain is Non-reducing polyketide synthase ustP from Ustilaginoidea virens (Rice false smut fungus).